The following is a 178-amino-acid chain: Caveolin-1 (178 aa).

Ser-2 is modified (N-acetylserine). Ser-2 bears the Phosphoserine mark. The interval 2-94 is required for homooligomerization; sequence SGGKYVDSEG…WKASFTTFTV (93 aa). At 2 to 104 the chain is on the cytoplasmic side; the sequence is SGGKYVDSEG…TKYWFYRLLS (103 aa). Lys-5 bears the N6-acetyllysine; alternate mark. A Glycyl lysine isopeptide (Lys-Gly) (interchain with G-Cter in ubiquitin); alternate cross-link involves residue Lys-5. Position 6 is a phosphotyrosine (Tyr-6). Position 9 is a phosphoserine (Ser-9). Position 14 is a phosphotyrosine; by ABL1 and INSR (Tyr-14). Phosphotyrosine is present on Tyr-25. Residues Lys-26, Lys-30, Lys-39, Lys-47, and Lys-57 each participate in a glycyl lysine isopeptide (Lys-Gly) (interchain with G-Cter in ubiquitin) cross-link. Positions 82–94 are interaction with CAVIN3; the sequence is DGIWKASFTTFTV. Positions 105-125 form an intramembrane region, helical; the sequence is TIFGIPMALIWGIYFAILSFL. At 126-178 the chain is on the cytoplasmic side; the sequence is HIWAVVPCIKSFLIEIQCISRVYSIYVHTFCDPLFEAIGKIFSNIRISTQKEI. An interacts with SPRY1, SPRY2, SPRY3 and SPRY4 region spans residues 131-142; that stretch reads VPCIKSFLIEIQ. S-palmitoyl cysteine attachment occurs at residues Cys-133, Cys-143, and Cys-156. The segment at 149–160 is interacts with SPRY1, SPRY2, and SPRY4; that stretch reads SIYVHTFCDPLF. The interacts with SPRY1, SPRY2, SPRY3 and SPRY4 stretch occupies residues 167 to 178; that stretch reads FSNIRISTQKEI.

The protein belongs to the caveolin family. In terms of assembly, homooligomer. Interacts (via the N-terminus) with DPP4; the interaction is direct. Forms a stable heterooligomeric complex with CAV2 that targets to lipid rafts and drives caveolae formation. Interacts with BMX, BTK, CTNNB1, CDH1, GLIPR2, JUP, NOSTRIN, SNAP25 and STX1A. Interacts with SLC7A9. Interacts with TGFBR1. Interacts with CTNNB1, CDH1 and JUP. Interacts with PACSIN2; this interaction induces membrane tubulation. Interacts with CAVIN3 (via leucine-zipper domain) in a cholesterol-sensitive manner. Interacts with EHD2 in a cholesterol-dependent manner. Interacts with CAVIN1. Forms a ternary complex with UBXN6 and VCP; mediates CAV1 targeting to lysosomes for degradation. Interacts with ABCG1; this interaction regulates ABCG1-mediated cholesterol efflux. Interacts with NEU3; this interaction enhances NEU3 sialidase activity within caveola. Interacts (via C-terminus) with SPRY1, SPRY2 (via C-terminus), SPRY3, and SPRY4. Interacts with IGFBP5; this interaction allows trafficking of IGFBP5 from the plasma membrane to the nucleus. In terms of processing, the N-terminus of both isoforms are blocked. Post-translationally, phosphorylated at Tyr-14 by ABL1 in response to oxidative stress. Ubiquitinated. Undergo monoubiquitination and multi- and/or polyubiquitination. Monoubiquitination of N-terminal lysines promotes integration in a ternary complex with UBXN6 and VCP which promotes oligomeric CAV1 targeting to lysosomes for degradation. Ubiquitinated by ZNRF1; leading to degradation and modulation of the TLR4-mediated immune response. Adipose tissue, lung, heart, skeletal muscle, stomach, small bowel, kidney, spleen and testis (at protein level).

The protein localises to the golgi apparatus membrane. It localises to the cell membrane. The protein resides in the membrane. It is found in the caveola. Its subcellular location is the membrane raft. The protein localises to the golgi apparatus. It localises to the trans-Golgi network. In terms of biological role, may act as a scaffolding protein within caveolar membranes. Forms a stable heterooligomeric complex with CAV2 that targets to lipid rafts and drives caveolae formation. Mediates the recruitment of CAVIN proteins (CAVIN1/2/3/4) to the caveolae. Interacts directly with G-protein alpha subunits and can functionally regulate their activity. Involved in the costimulatory signal essential for T-cell receptor (TCR)-mediated T-cell activation. Its binding to DPP4 induces T-cell proliferation and NF-kappa-B activation in a T-cell receptor/CD3-dependent manner. Recruits CTNNB1 to caveolar membranes and may regulate CTNNB1-mediated signaling through the Wnt pathway. Negatively regulates TGFB1-mediated activation of SMAD2/3 by mediating the internalization of TGFBR1 from membrane rafts leading to its subsequent degradation. Binds 20(S)-hydroxycholesterol (20(S)-OHC). This Mus musculus (Mouse) protein is Caveolin-1 (Cav1).